A 507-amino-acid polypeptide reads, in one-letter code: Maturase K (507 aa).

The protein belongs to the intron maturase 2 family. MatK subfamily.

The protein resides in the plastid. Its subcellular location is the chloroplast. In terms of biological role, usually encoded in the trnK tRNA gene intron. Probably assists in splicing its own and other chloroplast group II introns. The polypeptide is Maturase K (Liriodendron tulipifera (Tuliptree)).